The following is a 130-amino-acid chain: Holin-like protein CidA (130 aa).

4 helical membrane passes run 6-26 (FVIK…IGTE), 31-51 (LHIP…LLQF), 65-85 (FLLK…MDVA), and 93-113 (ILFF…SGYI).

The protein belongs to the CidA/LrgA family. CidA subfamily.

The protein resides in the cell membrane. In terms of biological role, increases the activity of extracellular murein hydrolases possibly by mediating their export via hole formation. Inhibited by the antiholin-like proteins LrgAB. In an unstressed cell, the LrgAB products probably inhibit the function of the CidAB proteins. When a cell is stressed by the addition of antibiotics or by other factors in the environment, the CidAB proteins possibly oligomerize within the bacterial cell membrane, creating lesions that disrupt the proton motive force, which in turn results in loss of cell viability. These lesions are also hypothesized to regulate the subsequent cell lysis by either allowing the murein hydrolases access to the cell wall substrate and/or regulating their activity by a possible change in the cell wall pH that results from loss of membrane potential. The sequence is that of Holin-like protein CidA from Staphylococcus epidermidis (strain ATCC 35984 / DSM 28319 / BCRC 17069 / CCUG 31568 / BM 3577 / RP62A).